The primary structure comprises 361 residues: Queuine tRNA-ribosyltransferase (361 aa).

D92 acts as the Proton acceptor in catalysis. Residues 92-96, D146, Q189, and G216 contribute to the substrate site; that span reads DSGGF. The RNA binding stretch occupies residues 247 to 253; the sequence is GVGKPAD. D266 (nucleophile) is an active-site residue. Positions 271-275 are RNA binding; important for wobble base 34 recognition; it reads TRSGR. Residues C304, C306, C309, and H335 each coordinate Zn(2+).

This sequence belongs to the queuine tRNA-ribosyltransferase family. In terms of assembly, homodimer. Within each dimer, one monomer is responsible for RNA recognition and catalysis, while the other monomer binds to the replacement base PreQ1. Zn(2+) is required as a cofactor.

It catalyses the reaction 7-aminomethyl-7-carbaguanine + guanosine(34) in tRNA = 7-aminomethyl-7-carbaguanosine(34) in tRNA + guanine. The protein operates within tRNA modification; tRNA-queuosine biosynthesis. In terms of biological role, catalyzes the base-exchange of a guanine (G) residue with the queuine precursor 7-aminomethyl-7-deazaguanine (PreQ1) at position 34 (anticodon wobble position) in tRNAs with GU(N) anticodons (tRNA-Asp, -Asn, -His and -Tyr). Catalysis occurs through a double-displacement mechanism. The nucleophile active site attacks the C1' of nucleotide 34 to detach the guanine base from the RNA, forming a covalent enzyme-RNA intermediate. The proton acceptor active site deprotonates the incoming PreQ1, allowing a nucleophilic attack on the C1' of the ribose to form the product. After dissociation, two additional enzymatic reactions on the tRNA convert PreQ1 to queuine (Q), resulting in the hypermodified nucleoside queuosine (7-(((4,5-cis-dihydroxy-2-cyclopenten-1-yl)amino)methyl)-7-deazaguanosine). The polypeptide is Queuine tRNA-ribosyltransferase (Rickettsia typhi (strain ATCC VR-144 / Wilmington)).